The primary structure comprises 63 residues: Large ribosomal subunit protein bL32 (63 aa).

The span at 1–18 (MPVPKRKTSPSRRGKRRS) shows a compositional bias: basic residues. A disordered region spans residues 1–26 (MPVPKRKTSPSRRGKRRSHDGLRPEN).

The protein belongs to the bacterial ribosomal protein bL32 family.

The protein is Large ribosomal subunit protein bL32 of Neorickettsia sennetsu (strain ATCC VR-367 / Miyayama) (Ehrlichia sennetsu).